Consider the following 308-residue polypeptide: 4-hydroxy-3-methylbut-2-enyl diphosphate reductase (308 aa).

Residue Cys-13 coordinates [4Fe-4S] cluster. The (2E)-4-hydroxy-3-methylbut-2-enyl diphosphate site is built by His-42 and His-75. Residues His-42 and His-75 each coordinate dimethylallyl diphosphate. Isopentenyl diphosphate is bound by residues His-42 and His-75. Residue Cys-97 coordinates [4Fe-4S] cluster. His-125 serves as a coordination point for (2E)-4-hydroxy-3-methylbut-2-enyl diphosphate. Position 125 (His-125) interacts with dimethylallyl diphosphate. His-125 provides a ligand contact to isopentenyl diphosphate. Residue Glu-127 is the Proton donor of the active site. Thr-165 contacts (2E)-4-hydroxy-3-methylbut-2-enyl diphosphate. Cys-195 lines the [4Fe-4S] cluster pocket. Ser-223, Ser-224, Asn-225, and Ser-267 together coordinate (2E)-4-hydroxy-3-methylbut-2-enyl diphosphate. The dimethylallyl diphosphate site is built by Ser-223, Ser-224, Asn-225, and Ser-267. The isopentenyl diphosphate site is built by Ser-223, Ser-224, Asn-225, and Ser-267.

This sequence belongs to the IspH family. Requires [4Fe-4S] cluster as cofactor.

The catalysed reaction is isopentenyl diphosphate + 2 oxidized [2Fe-2S]-[ferredoxin] + H2O = (2E)-4-hydroxy-3-methylbut-2-enyl diphosphate + 2 reduced [2Fe-2S]-[ferredoxin] + 2 H(+). It carries out the reaction dimethylallyl diphosphate + 2 oxidized [2Fe-2S]-[ferredoxin] + H2O = (2E)-4-hydroxy-3-methylbut-2-enyl diphosphate + 2 reduced [2Fe-2S]-[ferredoxin] + 2 H(+). It participates in isoprenoid biosynthesis; dimethylallyl diphosphate biosynthesis; dimethylallyl diphosphate from (2E)-4-hydroxy-3-methylbutenyl diphosphate: step 1/1. It functions in the pathway isoprenoid biosynthesis; isopentenyl diphosphate biosynthesis via DXP pathway; isopentenyl diphosphate from 1-deoxy-D-xylulose 5-phosphate: step 6/6. Functionally, catalyzes the conversion of 1-hydroxy-2-methyl-2-(E)-butenyl 4-diphosphate (HMBPP) into a mixture of isopentenyl diphosphate (IPP) and dimethylallyl diphosphate (DMAPP). Acts in the terminal step of the DOXP/MEP pathway for isoprenoid precursor biosynthesis. The sequence is that of 4-hydroxy-3-methylbut-2-enyl diphosphate reductase from Chlamydia muridarum (strain MoPn / Nigg).